Reading from the N-terminus, the 351-residue chain is Transcription factor bHLH93 (351 aa).

A bHLH domain is found at glycine 174–leucine 223.

As to quaternary structure, homodimer. Interacts with FAMA. As to expression, broadly expressed.

It localises to the nucleus. In terms of biological role, transcription factor. May be involved in the differentiation of stomatal guard cells. This Arabidopsis thaliana (Mouse-ear cress) protein is Transcription factor bHLH93 (BHLH93).